The primary structure comprises 114 residues: Protein gamma (114 aa).

This is Protein gamma (gamma) from Bovine ephemeral fever virus (strain BB7721) (BEFV).